A 291-amino-acid polypeptide reads, in one-letter code: ATP synthase subunit a (291 aa).

Transmembrane regions (helical) follow at residues 47–67, 140–160, 167–187, 207–227, and 230–250; these read FTNL…LVFV, HFLI…IVGF, FFSF…LVLL, MMAG…MLFL, and IFYF…TGLE.

It belongs to the ATPase A chain family. F-type ATPases have 2 components, CF(1) - the catalytic core - and CF(0) - the membrane proton channel. CF(1) has five subunits: alpha(3), beta(3), gamma(1), delta(1), epsilon(1). CF(0) has three main subunits: a, b and c.

It localises to the mitochondrion inner membrane. Functionally, mitochondrial membrane ATP synthase (F(1)F(0) ATP synthase or Complex V) produces ATP from ADP in the presence of a proton gradient across the membrane which is generated by electron transport complexes of the respiratory chain. F-type ATPases consist of two structural domains, F(1) - containing the extramembraneous catalytic core and F(0) - containing the membrane proton channel, linked together by a central stalk and a peripheral stalk. During catalysis, ATP synthesis in the catalytic domain of F(1) is coupled via a rotary mechanism of the central stalk subunits to proton translocation. Key component of the proton channel; it may play a direct role in the translocation of protons across the membrane. In Zea mays (Maize), this protein is ATP synthase subunit a (ATP6).